The chain runs to 366 residues: Chorismate synthase (366 aa).

NADP(+)-binding residues include Arg48 and Arg54. Residues 125 to 127 (RSS), 238 to 239 (NA), Gly278, 293 to 297 (KPTSS), and Arg319 contribute to the FMN site.

This sequence belongs to the chorismate synthase family. As to quaternary structure, homotetramer. FMNH2 serves as cofactor.

It carries out the reaction 5-O-(1-carboxyvinyl)-3-phosphoshikimate = chorismate + phosphate. It functions in the pathway metabolic intermediate biosynthesis; chorismate biosynthesis; chorismate from D-erythrose 4-phosphate and phosphoenolpyruvate: step 7/7. Its function is as follows. Catalyzes the anti-1,4-elimination of the C-3 phosphate and the C-6 proR hydrogen from 5-enolpyruvylshikimate-3-phosphate (EPSP) to yield chorismate, which is the branch point compound that serves as the starting substrate for the three terminal pathways of aromatic amino acid biosynthesis. This reaction introduces a second double bond into the aromatic ring system. The protein is Chorismate synthase of Laribacter hongkongensis (strain HLHK9).